A 573-amino-acid chain; its full sequence is Plasmepsin X (573 aa).

An N-terminal signal peptide occupies residues Met-1 to Cys-26. Positions Thr-27–Leu-221 are excised as a propeptide. 2 cysteine pairs are disulfide-bonded: Cys-39–Cys-51 and Cys-42–Cys-48. Residues Lys-167–Asn-211 form a disordered region. Positions Asn-183–Leu-203 are enriched in acidic residues. In terms of domain architecture, Peptidase A1 spans Phe-248–Ala-567. The active site involves Asp-266. A disulfide bond links Cys-279 and Cys-284. Residue Asn-334 is glycosylated (N-linked (GlcNAc...) asparagine). Cysteines 447 and 448 form a disulfide. Asp-457 is an active-site residue. Residues Cys-482 and Cys-521 are joined by a disulfide bond.

This sequence belongs to the peptidase A1 family. In terms of processing, autocleaved into a p16 prodomain form and two mature forms p44 and p51.

Its subcellular location is the cytoplasmic vesicle. The protein resides in the secretory vesicle. With respect to regulation, inhibited by aminohydantoin compounds such as CWHM-117. During the asexual blood stage, processes key proteins essential for merozoite egress and invasion of host erythrocytes. Cleaves and activates proteases SUB1 and SUB2. May process members of the EBL and Rh protein families. Also cleaves apical membrane protein AMA1. During the mosquito vector stage and probably in ookinetes, cleaves CelTOS. This is Plasmepsin X from Plasmodium falciparum (isolate NF54).